The primary structure comprises 650 residues: Putative transcriptional regulator MtlR (650 aa).

The region spanning 276–382 is the PRD domain; that stretch reads KFDSAFFYNI…ASSLRRSPDI (107 aa). Residues 490–640 form the PTS EIIA type-2 domain; that stretch reads YFLATQQLLQ…DIIYQLLNQI (151 aa). Phosphohistidine; by HPr is present on H556.

Its function is as follows. Not necessary for mannitol utilization. May be involved in regulation of the mannitol phosphoenolpyruvate-dependent sugar phosphotransferase system (PTS). The polypeptide is Putative transcriptional regulator MtlR (mtlR) (Streptococcus mutans serotype c (strain ATCC 700610 / UA159)).